A 192-amino-acid chain; its full sequence is Crossover junction endodeoxyribonuclease RuvC (192 aa).

Residues Asp-9, Glu-70, and Asp-143 contribute to the active site. Asp-9, Glu-70, and Asp-143 together coordinate Mg(2+). The disordered stretch occupies residues 161 to 192 (GASVATTGPGSSSLTPAQRAWAEAEAKARRAR). Polar residues predominate over residues 163–176 (SVATTGPGSSSLTP). The span at 182-192 (AEAEAKARRAR) shows a compositional bias: basic and acidic residues.

The protein belongs to the RuvC family. Homodimer which binds Holliday junction (HJ) DNA. The HJ becomes 2-fold symmetrical on binding to RuvC with unstacked arms; it has a different conformation from HJ DNA in complex with RuvA. In the full resolvosome a probable DNA-RuvA(4)-RuvB(12)-RuvC(2) complex forms which resolves the HJ. Mg(2+) is required as a cofactor.

The protein localises to the cytoplasm. The enzyme catalyses Endonucleolytic cleavage at a junction such as a reciprocal single-stranded crossover between two homologous DNA duplexes (Holliday junction).. Functionally, the RuvA-RuvB-RuvC complex processes Holliday junction (HJ) DNA during genetic recombination and DNA repair. Endonuclease that resolves HJ intermediates. Cleaves cruciform DNA by making single-stranded nicks across the HJ at symmetrical positions within the homologous arms, yielding a 5'-phosphate and a 3'-hydroxyl group; requires a central core of homology in the junction. The consensus cleavage sequence is 5'-(A/T)TT(C/G)-3'. Cleavage occurs on the 3'-side of the TT dinucleotide at the point of strand exchange. HJ branch migration catalyzed by RuvA-RuvB allows RuvC to scan DNA until it finds its consensus sequence, where it cleaves and resolves the cruciform DNA. The chain is Crossover junction endodeoxyribonuclease RuvC from Pseudarthrobacter chlorophenolicus (strain ATCC 700700 / DSM 12829 / CIP 107037 / JCM 12360 / KCTC 9906 / NCIMB 13794 / A6) (Arthrobacter chlorophenolicus).